A 446-amino-acid polypeptide reads, in one-letter code: MQATEANFDGLVGPTHNYAGLSFGNVASQNNEKSVANPKAAAKQGLRKMKQLADLGFHQGVLPPQERPSMRLLRELGFSGDDATVIARVARDAPELLAAASSASAMWTANAATVSPSADTNDGRVHFTPANLCSKLHRAIEHESTRRTLRTMFNDTDRFVVHEALPGTPALGDEGAANHTRFCEEYGARGVEFFVYGRSEYRRGPEPKRFPARQSFEASRAVAHRHGLADEATVYAQQNPDVIDAGVFHNDVIAVGNRNTLFCHQFAFVEPNAVYDELRAKLSGLKAAFNVIEVPDAQVSVADAVSSYLFNSQLLTRPDGKQVLVVPQECRENPRVAAYLDDLTSRTGPIDDVLVFDLRESMKNGGGPACLRLRVVLDDAERAAVTPGVWIDDTLFGRLDAWIEKHYRDRLAPADLTDPHLLAESRTALDELTQILGLGSLYDFQR.

Residues alanine 19 to serine 28, asparagine 110, and histidine 137 to arginine 138 contribute to the substrate site. Glutamate 174 is a catalytic residue. Arginine 213 lines the substrate pocket. Histidine 249 is an active-site residue. Residues aspartate 251 and asparagine 364 each contribute to the substrate site. Cysteine 370 functions as the Nucleophile in the catalytic mechanism.

It belongs to the succinylarginine dihydrolase family. Homodimer.

It catalyses the reaction N(2)-succinyl-L-arginine + 2 H2O + 2 H(+) = N(2)-succinyl-L-ornithine + 2 NH4(+) + CO2. It participates in amino-acid degradation; L-arginine degradation via AST pathway; L-glutamate and succinate from L-arginine: step 2/5. Functionally, catalyzes the hydrolysis of N(2)-succinylarginine into N(2)-succinylornithine, ammonia and CO(2). The sequence is that of N-succinylarginine dihydrolase from Paraburkholderia xenovorans (strain LB400).